We begin with the raw amino-acid sequence, 235 residues long: 5'-methylthioadenosine/S-adenosylhomocysteine nucleosidase (235 aa).

Catalysis depends on Glu12, which acts as the Proton acceptor. Substrate contacts are provided by residues Gly78, Met153, and Met174–Glu175. Asp198 functions as the Proton donor in the catalytic mechanism.

Belongs to the PNP/UDP phosphorylase family. MtnN subfamily.

It catalyses the reaction S-adenosyl-L-homocysteine + H2O = S-(5-deoxy-D-ribos-5-yl)-L-homocysteine + adenine. The enzyme catalyses S-methyl-5'-thioadenosine + H2O = 5-(methylsulfanyl)-D-ribose + adenine. It carries out the reaction 5'-deoxyadenosine + H2O = 5-deoxy-D-ribose + adenine. It participates in amino-acid biosynthesis; L-methionine biosynthesis via salvage pathway; S-methyl-5-thio-alpha-D-ribose 1-phosphate from S-methyl-5'-thioadenosine (hydrolase route): step 1/2. Its function is as follows. Catalyzes the irreversible cleavage of the glycosidic bond in both 5'-methylthioadenosine (MTA) and S-adenosylhomocysteine (SAH/AdoHcy) to adenine and the corresponding thioribose, 5'-methylthioribose and S-ribosylhomocysteine, respectively. Also cleaves 5'-deoxyadenosine, a toxic by-product of radical S-adenosylmethionine (SAM) enzymes, into 5-deoxyribose and adenine. The chain is 5'-methylthioadenosine/S-adenosylhomocysteine nucleosidase from Pseudoalteromonas translucida (strain TAC 125).